The chain runs to 448 residues: Deoxyguanosinetriphosphate triphosphohydrolase-like protein (448 aa).

The HD domain occupies 67-260; it reads RLTHSLEVSQ…MELADDIAYG (194 aa).

This sequence belongs to the dGTPase family. Type 2 subfamily.

This is Deoxyguanosinetriphosphate triphosphohydrolase-like protein from Aliivibrio salmonicida (strain LFI1238) (Vibrio salmonicida (strain LFI1238)).